A 405-amino-acid polypeptide reads, in one-letter code: Glucose-1-phosphate adenylyltransferase (405 aa).

Residues Y96, G161, 176–177 (EK), and S194 each bind alpha-D-glucose 1-phosphate.

This sequence belongs to the bacterial/plant glucose-1-phosphate adenylyltransferase family. As to quaternary structure, homotetramer.

The enzyme catalyses alpha-D-glucose 1-phosphate + ATP + H(+) = ADP-alpha-D-glucose + diphosphate. It participates in glycan biosynthesis; glycogen biosynthesis. Functionally, involved in the biosynthesis of ADP-glucose, a building block required for the elongation reactions to produce glycogen. Catalyzes the reaction between ATP and alpha-D-glucose 1-phosphate (G1P) to produce pyrophosphate and ADP-Glc. This Photobacterium profundum (strain SS9) protein is Glucose-1-phosphate adenylyltransferase.